A 372-amino-acid chain; its full sequence is Heterogeneous nuclear rnp K-like protein 2 (372 aa).

The segment covering M1–A23 has biased composition (polar residues). Positions M1–V49 are disordered. Residues S24–S39 are compositionally biased toward low complexity. 3 consecutive KH domains span residues T59 to I123, I167 to I232, and E283 to L354.

The protein belongs to the HEK2 family. Binds RNA.

The protein localises to the cytoplasm. It localises to the P-body. Its subcellular location is the nucleus. The protein resides in the chromosome. It is found in the telomere. RNA-binding protein involved in the correct localization of transcripts in the cell. RNA localization is a widespread mechanism for achieving localized protein synthesis. Involved in structural and functional organization of telomeric chromatin and regulates silencing at the HMR locus. This is Heterogeneous nuclear rnp K-like protein 2 (HEK2) from Zygosaccharomyces rouxii (strain ATCC 2623 / CBS 732 / NBRC 1130 / NCYC 568 / NRRL Y-229).